Here is an 85-residue protein sequence, read N- to C-terminus: Small integral membrane protein 35 (85 aa).

The helical transmembrane segment at Ile-7–Gly-27 threads the bilayer.

Its subcellular location is the membrane. The sequence is that of Small integral membrane protein 35 from Mus musculus (Mouse).